The sequence spans 610 residues: DNA replication regulator sld2 (610 aa).

A compositionally biased stretch (basic and acidic residues) spans 28–42; sequence WAQKNDGKKPSREAI. 3 disordered regions span residues 28 to 115, 127 to 261, and 338 to 610; these read WAQK…AVHE, SPAV…ERSV, and EQGG…RRRR. 2 stretches are compositionally biased toward polar residues: residues 86–110 and 232–261; these read ETSL…SQHY and TKTS…ERSV. Composition is skewed to acidic residues over residues 373-386 and 414-428; these read VPEE…DEAA and FDDE…EEDL. Residues 442–464 show a composition bias toward basic residues; the sequence is VFKKKGQKRTTRKVNMRPTRTKR. Over residues 470-480 the composition is skewed to acidic residues; that stretch reads AEEEDDGEEEH. Positions 493–503 are enriched in basic and acidic residues; it reads KNLDGDDHHTL. Acidic residues predominate over residues 514-527; the sequence is EFDDGSEGEDEEAE. The span at 544–573 shows a compositional bias: basic and acidic residues; that stretch reads SAKEKTKKDATTETKKKKGTKEGGDEEPAK.

This sequence belongs to the SLD2 family.

The protein localises to the cytoplasm. The protein resides in the nucleus. In terms of biological role, has a role in the initiation of DNA replication. Required at S-phase checkpoint. This chain is DNA replication regulator sld2 (drc-4), found in Neurospora crassa (strain ATCC 24698 / 74-OR23-1A / CBS 708.71 / DSM 1257 / FGSC 987).